A 97-amino-acid chain; its full sequence is Lipolysis-activating peptide 1-alpha chain (97 aa).

Residues 1 to 21 form the signal peptide; the sequence is MNITLFCSVFILISLAGLSVS. Residues 25–88 enclose the LCN-type CS-alpha/beta domain; the sequence is PGNYPMSLYG…FWAAHKNHCK (64 aa). Intrachain disulfides connect cysteine 39/cysteine 62, cysteine 48/cysteine 67, and cysteine 52/cysteine 69.

Belongs to the long (3 C-C) scorpion toxin superfamily. In terms of assembly, monomer (edited version) and heterodimer (non-edited version) of this alpha chain and a beta chain (AC D9U2A2). As to expression, expressed by the venom gland.

The protein localises to the secreted. The heterodimer non-edited LVP1 induces lipolysis in rat adipocytes. Induction of lipolysis by LVP1 appears to be mediated through the beta-2 adrenergic receptor pathway (ADRB2). Functionally, the edited BmKBTx-like, similar to beta-toxins, may modulate voltage-gated sodium channels (Nav) and may block voltage-gated potassium channels (Kv). In Lychas mucronatus (Chinese swimming scorpion), this protein is Lipolysis-activating peptide 1-alpha chain.